The primary structure comprises 316 residues: L-lactate dehydrogenase 3 (316 aa).

NAD(+) contacts are provided by Val-16, Asp-37, Arg-42, and Tyr-68. A substrate-binding site is contributed by Arg-91. NAD(+) is bound by residues Ser-104, 121-123 (ASN), and Thr-146. 123-126 (NPVD) serves as a coordination point for substrate. Residue 151 to 154 (DSSR) coordinates substrate. The beta-D-fructose 1,6-bisphosphate site is built by Arg-156 and His-171. The Proton acceptor role is filled by His-178. Thr-233 serves as a coordination point for substrate.

The protein belongs to the LDH/MDH superfamily. LDH family. Homotetramer.

It localises to the cytoplasm. It catalyses the reaction (S)-lactate + NAD(+) = pyruvate + NADH + H(+). The protein operates within fermentation; pyruvate fermentation to lactate; (S)-lactate from pyruvate: step 1/1. With respect to regulation, allosterically activated by fructose 1,6-bisphosphate (FBP). In terms of biological role, catalyzes the conversion of lactate to pyruvate. The sequence is that of L-lactate dehydrogenase 3 from Bacillus thuringiensis subsp. konkukian (strain 97-27).